We begin with the raw amino-acid sequence, 165 residues long: Large ribosomal subunit protein uL11A (165 aa).

N5-methylarginine is present on R67.

It belongs to the universal ribosomal protein uL11 family. In terms of assembly, component of the large ribosomal subunit (LSU). Mature yeast ribosomes consist of a small (40S) and a large (60S) subunit. The 40S small subunit contains 1 molecule of ribosomal RNA (18S rRNA) and at least 33 different proteins. The large 60S subunit contains 3 rRNA molecules (25S, 5.8S and 5S rRNA) and at least 46 different proteins.

It localises to the cytoplasm. Its subcellular location is the nucleus. The protein resides in the nucleolus. This protein binds directly to 26S ribosomal RNA. In terms of biological role, component of the ribosome, a large ribonucleoprotein complex responsible for the synthesis of proteins in the cell. The small ribosomal subunit (SSU) binds messenger RNAs (mRNAs) and translates the encoded message by selecting cognate aminoacyl-transfer RNA (tRNA) molecules. The large subunit (LSU) contains the ribosomal catalytic site termed the peptidyl transferase center (PTC), which catalyzes the formation of peptide bonds, thereby polymerizing the amino acids delivered by tRNAs into a polypeptide chain. The nascent polypeptides leave the ribosome through a tunnel in the LSU and interact with protein factors that function in enzymatic processing, targeting, and the membrane insertion of nascent chains at the exit of the ribosomal tunnel. The chain is Large ribosomal subunit protein uL11A (rpl1201) from Schizosaccharomyces pombe (strain 972 / ATCC 24843) (Fission yeast).